The sequence spans 250 residues: Cholesterol ring-cleaving hydrolase IpdB subunit (250 aa).

This sequence belongs to the 3-oxoacid CoA-transferase subunit B family. Heterotetramer composed of 2 IpdA subunits and 2 IpdB subunits.

The enzyme catalyses (3E)-2-(2-carboxylatoethyl)-3-methyl-6-oxocyclohex-1-ene-1-carboxyl-CoA + H2O = 6-methyl-3,7-dioxodecanedioyl-CoA. It participates in steroid metabolism; cholesterol degradation. Functionally, involved in the final steps of cholesterol and steroid degradation. Opens the last steroid ring of cholesterol by catalyzing the hydrolysis of (3E)-2-(2-carboxylatoethyl)-3-methyl-6-oxocyclohex-1-ene-1-carboxyl-CoA (COCHEA-CoA) to 6-methyl-3,7-dioxodecanedioyl-CoA (MeDODA-CoA). This Mycobacterium bovis (strain ATCC BAA-935 / AF2122/97) protein is Cholesterol ring-cleaving hydrolase IpdB subunit.